The chain runs to 351 residues: Amylovoran biosynthesis glycosyltransferase AmsD (351 aa).

It belongs to the glycosyltransferase group 1 family. Glycosyltransferase 4 subfamily.

It participates in glycan metabolism; exopolysaccharide biosynthesis. Its function is as follows. Involved in the biosynthesis of amylovoran which functions as a virulence factor. May be involved in the formation of galactose alpha-1,6 linkages in amylovoran. The protein is Amylovoran biosynthesis glycosyltransferase AmsD (amsD) of Erwinia amylovora (Fire blight bacteria).